Here is a 427-residue protein sequence, read N- to C-terminus: Peptidase B (427 aa).

Lys-195 and Asp-200 together coordinate Mn(2+). The active site involves Lys-207. Positions 218, 277, and 279 each coordinate Mn(2+). Arg-281 is a catalytic residue.

Belongs to the peptidase M17 family. As to quaternary structure, homohexamer. It depends on Mn(2+) as a cofactor.

It localises to the cytoplasm. It carries out the reaction Release of an N-terminal amino acid, Xaa, from a peptide or arylamide. Xaa is preferably Glu or Asp but may be other amino acids, including Leu, Met, His, Cys and Gln.. Functionally, probably plays an important role in intracellular peptide degradation. The chain is Peptidase B from Escherichia coli O127:H6 (strain E2348/69 / EPEC).